Consider the following 1262-residue polypeptide: Synaptopodin-2 (1262 aa).

Residues 1 to 174 (MGTGDFICIS…PGSQEGHLVE (174 aa)) form an interaction with VPS18 region. In terms of domain architecture, PDZ spans 6-88 (FICISMTGGA…SLHLLIKRPT (83 aa)). 2 stretches are compositionally biased toward polar residues: residues 89–105 (SGTS…TNHQ) and 246–260 (TSLT…SSGR). Disordered stretches follow at residues 89 to 114 (SGTS…GPME) and 239 to 276 (PAPE…TGLP). Phosphoserine occurs at positions 304, 323, and 324. The segment at 323-363 (SSEGTEQGEDQRSGKDQGRPHKHRARHARLRRSESLSEKQV) is disordered. Residue threonine 327 is modified to Phosphothreonine. The segment covering 331–341 (EDQRSGKDQGR) has biased composition (basic and acidic residues). The segment covering 342–352 (PHKHRARHARL) has biased composition (basic residues). Basic and acidic residues predominate over residues 353 to 363 (RRSESLSEKQV). The short motif at 392-400 (KKRRRRARK) is the Nuclear localization signal element. Interaction with ACTN2 regions lie at residues 477-658 (MEML…FYDS), 659-922 (SEQI…PPVA), and 899-1153 (QSPT…NIEE). Disordered regions lie at residues 503 to 576 (AQNE…GPQR) and 592 to 703 (NQTA…SPNP). A phosphoserine mark is found at serine 518, serine 543, serine 544, serine 546, and serine 549. F-actin binding regions lie at residues 530–658 (TSYQ…FYDS) and 659–801 (SEQI…VTAV). Residues 540-552 (RMQSSVSESSFQM) show a composition bias toward low complexity. The interaction with YWHAB stretch occupies residues 554–560 (RSLGSVP). Residue serine 558 is modified to Phosphoserine; by PKA. Polar residues-rich tracts occupy residues 558–569 (SVPQQNGFSGVS) and 592–606 (NQTA…SVTS). Residue serine 599 is modified to Phosphoserine. The segment at 602-809 (QSVTSPIPDF…AVSSIKIAQP (208 aa)) is interaction with YWHAB. Position 605 is a phosphothreonine; by PKA and CaMK2 (threonine 605). Serine 606 is modified (phosphoserine). Composition is skewed to pro residues over residues 609–625 (PDFP…PPPE) and 639–650 (AQPPPWPQPAPW). An interaction with BAG3 region spans residues 610 to 621 (DFPAPPPYSAVS). A PPPY motif motif is present at residues 614–617 (PPPY). At tyrosine 617 the chain carries Phosphotyrosine. Serine 621 is modified (phosphoserine). Residues 659–914 (SEQIASRDER…LPASWKYSSN (256 aa)) form an F-actin bundling activity region. Serine 700 and serine 724 each carry phosphoserine. Disordered regions lie at residues 741 to 799 (MQSS…PQVT) and 833 to 868 (VVSH…GMSG). Residues 745–898 (AKQKTPPPVA…DTVQAHTVRA (154 aa)) are actin binding. At threonine 749 the chain carries Phosphothreonine. The span at 756–782 (KPAVKTSSSSQPVAPVSPVWSPGVAPA) shows a compositional bias: low complexity. Phosphoserine occurs at positions 772 and 776. Over residues 786-799 (AFSTTNPPNPPQVT) the composition is skewed to polar residues. Residues 808-1153 (QPTCPPARPA…EAFRPRNIEE (346 aa)) form an interaction with FLNC region. A phosphoserine mark is found at serine 900, serine 904, and serine 908. Residues 933 to 957 (LAAIKSQPPGAQASKTSKKKGKKPL) form a disordered region. The tract at residues 999–1018 (PAMKQALPPRQADIGSPTNA) is interaction with ZYX. Residues serine 1014, serine 1055, and serine 1090 each carry the phosphoserine modification.

The protein belongs to the synaptopodin family. May self-associate in muscle cells under oxidative stress. Binds F-actin. Interacts with ACTN2; ACTN2 is proposed to anchor SYOP2 at Z lines in mature myocytes. Interacts with AKAP6, PPP3CA and CAMK2A. Interacts (phosphorylated form) with YWHAB; YWHAB competes with ACTN2 for interaction with SYNPO2. Interacts with KPNA2; mediating nuclear import of SYNOP2; dependent on interaction with YWHAB. Interacts with IPO13; may be implicated in SYNOP2 nuclear import. Interacts with ZYX, FLNC, ILK. Interacts with BAG3 (via WW 1 domain). May associate with the CASA complex consisting of HSPA8, HSPB8 and BAG3. Interacts with VPS18. Phosphorylated by PKA, and by CaMK2 at multiple sites. Dephosphorylated by calcineurin at Ser-558 and Thr-605; abrogating interaction with YWHAB and impairing nuclear import.

It localises to the nucleus. It is found in the cytoplasm. The protein resides in the cytoskeleton. Its subcellular location is the myofibril. The protein localises to the sarcomere. It localises to the z line. It is found in the cell junction. The protein resides in the focal adhesion. Functionally, has an actin-binding and actin-bundling activity. Can induce the formation of F-actin networks. At the sarcomeric Z lines is proposed to act as adapter protein that links nascent myofibers to the sarcolemma via ZYX and may play a role in early assembly and stabilization of the Z lines. Involved in autophagosome formation. May play a role in chaperone-assisted selective autophagy (CASA) involved in Z lines maintenance in striated muscle under mechanical tension; may link the client-processing CASA chaperone machinery to a membrane-tethering and fusion complex providing autophagosome membranes. Involved in regulation of cell migration. May be a tumor suppressor. The polypeptide is Synaptopodin-2 (Synpo2) (Rattus norvegicus (Rat)).